A 602-amino-acid polypeptide reads, in one-letter code: Glutamyl-tRNA(Gln) amidotransferase subunit B, mitochondrial (602 aa).

The transit peptide at 1–52 directs the protein to the mitochondrion; it reads MLQQWLRQSPAAAGLLRCSRYRGPQAALLQLSPQRAPTYHAIRSLQTSAAES. A disordered region spans residues 61 to 83; the sequence is QLKQGAKGLKAQKRQRRESEEAS.

This sequence belongs to the GatB/GatE family. GatB subfamily. In terms of assembly, subunit of the heterotrimeric GatCAB amidotransferase (AdT) complex, composed of A, B and C subunits.

It is found in the mitochondrion. It catalyses the reaction L-glutamyl-tRNA(Gln) + L-glutamine + ATP + H2O = L-glutaminyl-tRNA(Gln) + L-glutamate + ADP + phosphate + H(+). In terms of biological role, allows the formation of correctly charged Gln-tRNA(Gln) through the transamidation of misacylated Glu-tRNA(Gln) in the mitochondria. The reaction takes place in the presence of glutamine and ATP through an activated gamma-phospho-Glu-tRNA(Gln). The polypeptide is Glutamyl-tRNA(Gln) amidotransferase subunit B, mitochondrial (Aspergillus clavatus (strain ATCC 1007 / CBS 513.65 / DSM 816 / NCTC 3887 / NRRL 1 / QM 1276 / 107)).